Here is a 610-residue protein sequence, read N- to C-terminus: Elongation factor 4 (610 aa).

The region spanning 11 to 193 (ENIRNFSIIA…QIVEKVPAPS (183 aa)) is the tr-type G domain. GTP contacts are provided by residues 23–28 (DHGKST) and 140–143 (NKID).

Belongs to the TRAFAC class translation factor GTPase superfamily. Classic translation factor GTPase family. LepA subfamily.

Its subcellular location is the cell membrane. The catalysed reaction is GTP + H2O = GDP + phosphate + H(+). Required for accurate and efficient protein synthesis under certain stress conditions. May act as a fidelity factor of the translation reaction, by catalyzing a one-codon backward translocation of tRNAs on improperly translocated ribosomes. Back-translocation proceeds from a post-translocation (POST) complex to a pre-translocation (PRE) complex, thus giving elongation factor G a second chance to translocate the tRNAs correctly. Binds to ribosomes in a GTP-dependent manner. This Streptococcus equi subsp. zooepidemicus (strain MGCS10565) protein is Elongation factor 4.